A 253-amino-acid polypeptide reads, in one-letter code: Snake venom serine proteinase 14 (253 aa).

The signal sequence occupies residues methionine 1–alanine 18. The propeptide occupies glutamine 19 to leucine 24. In terms of domain architecture, Peptidase S1 spans valine 25 to alanine 244. 6 disulfides stabilise this stretch: cysteine 31-cysteine 158, cysteine 49-cysteine 65, cysteine 93-cysteine 251, cysteine 137-cysteine 205, cysteine 169-cysteine 184, and cysteine 195-cysteine 220. Active-site charge relay system residues include histidine 64 and aspartate 105. 3 N-linked (GlcNAc...) asparagine glycosylation sites follow: asparagine 116, asparagine 117, and asparagine 149. Serine 199 acts as the Charge relay system in catalysis.

It belongs to the peptidase S1 family. Snake venom subfamily. As to quaternary structure, monomer. As to expression, expressed by the venom gland.

It localises to the secreted. Its function is as follows. Snake venom serine protease that may act in the hemostasis system of the prey. This Crotalus adamanteus (Eastern diamondback rattlesnake) protein is Snake venom serine proteinase 14.